A 435-amino-acid chain; its full sequence is Glutamyl-tRNA reductase (435 aa).

Substrate contacts are provided by residues 50–53 (TCNR), S110, 115–117 (ESQ), and Q121. C51 functions as the Nucleophile in the catalytic mechanism. 191-196 (GAGDMG) lines the NADP(+) pocket.

This sequence belongs to the glutamyl-tRNA reductase family. Homodimer.

The catalysed reaction is (S)-4-amino-5-oxopentanoate + tRNA(Glu) + NADP(+) = L-glutamyl-tRNA(Glu) + NADPH + H(+). It participates in porphyrin-containing compound metabolism; protoporphyrin-IX biosynthesis; 5-aminolevulinate from L-glutamyl-tRNA(Glu): step 1/2. In terms of biological role, catalyzes the NADPH-dependent reduction of glutamyl-tRNA(Glu) to glutamate 1-semialdehyde (GSA). The sequence is that of Glutamyl-tRNA reductase from Sulfurovum sp. (strain NBC37-1).